Here is a 525-residue protein sequence, read N- to C-terminus: Plant UBX domain-containing protein 13 (525 aa).

One can recognise a UBA-like domain in the interval 2–44 (ATPTQEAIDTFMTITGSSNAVAVRKLEEYRGNLNRAVNAYFTH). 3 disordered regions span residues 67 to 96 (RTTD…PPFV), 150 to 172 (DDDN…SAEN), and 194 to 328 (METG…EEHD). Residues 209–229 (AEREVLRSEGWKASSSEREAS) show a composition bias toward basic and acidic residues. Residues 254–274 (SEDDDDDDDDDPDYVEEEEEP) show a composition bias toward acidic residues. The residue at position 362 (S362) is a Phosphoserine. Residues 380–436 (LASLEADRVKAEARRLEEEAARVEAIEEAKRKEEEARRKVEEEQELERQLVSKEASL) adopt a coiled-coil conformation. The segment covering 408–430 (AKRKEEEARRKVEEEQELERQLV) has biased composition (basic and acidic residues). Residues 408 to 446 (AKRKEEEARRKVEEEQELERQLVSKEASLPQEPPAGEEN) are disordered. The region spanning 443–521 (GEENAITLQV…GLTSKQEALF (79 aa)) is the UBX domain.

This chain is Plant UBX domain-containing protein 13, found in Arabidopsis thaliana (Mouse-ear cress).